The chain runs to 89 residues: Small ribosomal subunit protein uS15 (89 aa).

This sequence belongs to the universal ribosomal protein uS15 family. Part of the 30S ribosomal subunit. Forms a bridge to the 50S subunit in the 70S ribosome, contacting the 23S rRNA.

In terms of biological role, one of the primary rRNA binding proteins, it binds directly to 16S rRNA where it helps nucleate assembly of the platform of the 30S subunit by binding and bridging several RNA helices of the 16S rRNA. Forms an intersubunit bridge (bridge B4) with the 23S rRNA of the 50S subunit in the ribosome. This Prochlorococcus marinus (strain MIT 9215) protein is Small ribosomal subunit protein uS15.